The sequence spans 158 residues: NADPH-dependent 7-cyano-7-deazaguanine reductase (158 aa).

Cysteine 56 (thioimide intermediate) is an active-site residue. Aspartate 63 (proton donor) is an active-site residue. Substrate contacts are provided by residues 78–80 (VES) and 97–98 (HE).

It belongs to the GTP cyclohydrolase I family. QueF type 1 subfamily.

It is found in the cytoplasm. It catalyses the reaction 7-aminomethyl-7-carbaguanine + 2 NADP(+) = 7-cyano-7-deazaguanine + 2 NADPH + 3 H(+). The protein operates within tRNA modification; tRNA-queuosine biosynthesis. Its function is as follows. Catalyzes the NADPH-dependent reduction of 7-cyano-7-deazaguanine (preQ0) to 7-aminomethyl-7-deazaguanine (preQ1). In Rhodopseudomonas palustris (strain HaA2), this protein is NADPH-dependent 7-cyano-7-deazaguanine reductase.